Consider the following 375-residue polypeptide: Histidine biosynthesis bifunctional protein HisB (375 aa).

A histidinol-phosphatase region spans residues 1–168; sequence MTPILFVDRD…GIAHELADAP (168 aa). The Nucleophile role is filled by aspartate 8. 3 residues coordinate Mg(2+): aspartate 8, aspartate 10, and aspartate 128. Aspartate 10 acts as the Proton donor in catalysis. Residues 169–375 are imidazoleglycerol-phosphate dehydratase; the sequence is RRAVVQRNTK…TALPSTKGAL (207 aa).

In the N-terminal section; belongs to the histidinol-phosphatase family. This sequence in the C-terminal section; belongs to the imidazoleglycerol-phosphate dehydratase family. Mg(2+) serves as cofactor.

The protein resides in the cytoplasm. The enzyme catalyses D-erythro-1-(imidazol-4-yl)glycerol 3-phosphate = 3-(imidazol-4-yl)-2-oxopropyl phosphate + H2O. It carries out the reaction L-histidinol phosphate + H2O = L-histidinol + phosphate. It functions in the pathway amino-acid biosynthesis; L-histidine biosynthesis; L-histidine from 5-phospho-alpha-D-ribose 1-diphosphate: step 6/9. Its pathway is amino-acid biosynthesis; L-histidine biosynthesis; L-histidine from 5-phospho-alpha-D-ribose 1-diphosphate: step 8/9. The sequence is that of Histidine biosynthesis bifunctional protein HisB from Xanthomonas campestris pv. campestris (strain B100).